Here is a 288-residue protein sequence, read N- to C-terminus: uncharacterized protein (288 aa).

This sequence to M.bovis Mb1522c, M.leprae ML1804 and M.avium MAV321.

This is an uncharacterized protein from Mycobacterium tuberculosis (strain CDC 1551 / Oshkosh).